The chain runs to 138 residues: ATP synthase epsilon chain (138 aa).

The protein belongs to the ATPase epsilon chain family. In terms of assembly, F-type ATPases have 2 components, CF(1) - the catalytic core - and CF(0) - the membrane proton channel. CF(1) has five subunits: alpha(3), beta(3), gamma(1), delta(1), epsilon(1). CF(0) has three main subunits: a, b and c.

It is found in the cell inner membrane. In terms of biological role, produces ATP from ADP in the presence of a proton gradient across the membrane. The sequence is that of ATP synthase epsilon chain from Cupriavidus necator (strain ATCC 17699 / DSM 428 / KCTC 22496 / NCIMB 10442 / H16 / Stanier 337) (Ralstonia eutropha).